The primary structure comprises 607 residues: MSSCINPSTLATSVNGFKCLPLATNRAAIRIMAKNKPVQCLVSTKYDNLTVDRRSANYQPSIWDHDFLQSLNSNYTDETYKRRAEELKGKVKTAIKDVTEPLDQLELIDNLQRLGLAYHFEPEIRNILRNIHNHNKDYNWRKENLYATSLEFRLLRQHGYPVSQEVFSGFKDDKVGFICDDFKGILSLHEASYYSLEGESIMEEAWQFTSKHLKEMMITSNSKEEDVFVAEQAKRALELPLHWKAPMLEARWFIHVYEKREDKNHLLLELAKLEFNTLQAIYQEELKDISGWWKDTGLGEKLSFARNRLVASFLWSMGIAFEPQFAYCRRVLTISIALITVIDDIYDVYGTLDELEIFTDAVARWDINYALKHLPGYMKMCFLALYNFVNEFAYYVLKQQDFDMLLSIKHAWLGLIQAYLVEAKWYHSKYTPKLEEYLENGLVSITGPLIITISYLSGTNPIIKKELEFLESNPDIVHWSSKIFRLQDDLGTSSDEIQRGDVPKSIQCYMHETGASEEVAREHIKDMMRQMWKKVNAYTADKDSPLTRTTAEFLLNLVRMSHFMYLHGDGHGVQNQETIDVGFTLLFQPIPLEDKDMAFTASPGTKG.

A chloroplast-targeting transit peptide spans 1-52; sequence MSSCINPSTLATSVNGFKCLPLATNRAAIRIMAKNKPVQCLVSTKYDNLTVD. Positions 343 and 347 each coordinate Mn(2+). 5 residues coordinate substrate: Asp343, Asp347, Arg485, Asp488, and Lys504. The DDXXD motif signature appears at 343-347; that stretch reads DDIYD. Asp488 serves as a coordination point for Mn(2+).

This sequence belongs to the terpene synthase family. The cofactor is Mg(2+). It depends on Mn(2+) as a cofactor.

Its subcellular location is the plastid. The protein resides in the chloroplast. The catalysed reaction is (2E)-geranyl diphosphate = (4R)-limonene + diphosphate. Its activity is regulated as follows. Inhibited by 2-fluorogeranyl diphosphate (FGPP) and 2-fluoroneryl diphosphate (FNPP). In terms of biological role, catalyzes the conversion of geranyl diphosphate to (+)-(4R)-limonene. Produces exclusively the (+)-enantiomer. Can use neryl diphosphate as substrate. Has no activity with farnesyl diphosphate. This is (R)-limonene synthase 1, chloroplastic from Citrus sinensis (Sweet orange).